The following is a 378-amino-acid chain: Erythronate-4-phosphate dehydrogenase (378 aa).

Ser-45 and Thr-66 together coordinate substrate. NAD(+) contacts are provided by Asp-146 and Thr-175. Arg-208 is a catalytic residue. Asp-232 is an NAD(+) binding site. Glu-237 is a catalytic residue. Residue His-254 is the Proton donor of the active site. An NAD(+)-binding site is contributed by Gly-257. Tyr-258 is a binding site for substrate.

Belongs to the D-isomer specific 2-hydroxyacid dehydrogenase family. PdxB subfamily. As to quaternary structure, homodimer.

The protein resides in the cytoplasm. The catalysed reaction is 4-phospho-D-erythronate + NAD(+) = (R)-3-hydroxy-2-oxo-4-phosphooxybutanoate + NADH + H(+). The protein operates within cofactor biosynthesis; pyridoxine 5'-phosphate biosynthesis; pyridoxine 5'-phosphate from D-erythrose 4-phosphate: step 2/5. Functionally, catalyzes the oxidation of erythronate-4-phosphate to 3-hydroxy-2-oxo-4-phosphonooxybutanoate. The polypeptide is Erythronate-4-phosphate dehydrogenase (Shigella flexneri serotype 5b (strain 8401)).